The sequence spans 85 residues: Toxin To6 (85 aa).

The first 20 residues, 1 to 20 (MSIFPIILALLLIGLDEGEA), serve as a signal peptide directing secretion. The LCN-type CS-alpha/beta domain occupies 21–83 (LDGYPLSKNN…EMYPGRLPCN (63 aa)). Intrachain disulfides connect Cys-32/Cys-82, Cys-36/Cys-59, Cys-42/Cys-64, and Cys-46/Cys-66.

Expressed by the venom gland.

Its subcellular location is the secreted. Its function is as follows. Beta toxins bind voltage-independently at site-4 of sodium channels (Nav) and shift the voltage of activation toward more negative potentials thereby affecting sodium channel activation and promoting spontaneous and repetitive firing. The protein is Toxin To6 of Tityus obscurus (Amazonian scorpion).